Here is a 322-residue protein sequence, read N- to C-terminus: HPr kinase/phosphorylase (322 aa).

Active-site residues include H143 and K164. 158-165 contributes to the ATP binding site; sequence GRSGVGKS. S165 provides a ligand contact to Mg(2+). The Proton acceptor; for phosphorylation activity. Proton donor; for dephosphorylation activity role is filled by D182. Positions 206 to 215 are important for the catalytic mechanism of both phosphorylation and dephosphorylation; sequence MEIRGLGILN. Residue E207 participates in Mg(2+) binding. The active site involves R250. The tract at residues 271 to 276 is important for the catalytic mechanism of dephosphorylation; that stretch reads PVKPGR.

This sequence belongs to the HPrK/P family. Homohexamer. The cofactor is Mg(2+).

It catalyses the reaction [HPr protein]-L-serine + ATP = [HPr protein]-O-phospho-L-serine + ADP + H(+). It carries out the reaction [HPr protein]-O-phospho-L-serine + phosphate + H(+) = [HPr protein]-L-serine + diphosphate. Its function is as follows. Catalyzes the ATP- as well as the pyrophosphate-dependent phosphorylation of a specific serine residue in HPr, a phosphocarrier protein of the phosphoenolpyruvate-dependent sugar phosphotransferase system (PTS). HprK/P also catalyzes the pyrophosphate-producing, inorganic phosphate-dependent dephosphorylation (phosphorolysis) of seryl-phosphorylated HPr (P-Ser-HPr). The chain is HPr kinase/phosphorylase from Leptospira biflexa serovar Patoc (strain Patoc 1 / Ames).